Reading from the N-terminus, the 42-residue chain is MQYFKTYLSTAPVIATIWFGFLAGLLIEINRFFPDALVLPYL.

Residues 7 to 27 (YLSTAPVIATIWFGFLAGLLI) traverse the membrane as a helical segment.

This sequence belongs to the PsaJ family.

It is found in the plastid. It localises to the chloroplast thylakoid membrane. Its function is as follows. May help in the organization of the PsaE and PsaF subunits. This Chaetosphaeridium globosum (Charophycean green alga) protein is Photosystem I reaction center subunit IX.